Here is a 319-residue protein sequence, read N- to C-terminus: MTPMKIILAAPRGFCAGVNMAIDSLDLTLQKFGPPVYVYHEIVHNQFVVKTFREKGAVFVDTIDEVPEGGVLLFSAHGVSPEIRKAAQARKLHALDATCPLVTKVHLEAIKYAKAGYTIILIGHEGHDEVLGTMGEAPEAIVLVEDEADVDRLEFEPGTQLAYLTQTTLSVDDAGRVIRRLRERFPEIHSPPKDDICYATQNRQEAVKLLREDADVIVVLGSQNSSNSQRLKELAAEQGKRAMLVDGPQDLAVDQFSDDDRVLITAGASAPESVVQSTIDWLKENFDASVDTQVVREEDVQFPLPKPLRAFAAEQAAAK.

C15 is a binding site for [4Fe-4S] cluster. (2E)-4-hydroxy-3-methylbut-2-enyl diphosphate is bound by residues H44 and H77. 2 residues coordinate dimethylallyl diphosphate: H44 and H77. Residues H44 and H77 each coordinate isopentenyl diphosphate. C99 is a binding site for [4Fe-4S] cluster. Residue H127 participates in (2E)-4-hydroxy-3-methylbut-2-enyl diphosphate binding. H127 is a dimethylallyl diphosphate binding site. H127 is an isopentenyl diphosphate binding site. E129 functions as the Proton donor in the catalytic mechanism. T167 provides a ligand contact to (2E)-4-hydroxy-3-methylbut-2-enyl diphosphate. C197 contributes to the [4Fe-4S] cluster binding site. The (2E)-4-hydroxy-3-methylbut-2-enyl diphosphate site is built by S225, S226, N227, and S269. Residues S225, S226, N227, and S269 each contribute to the dimethylallyl diphosphate site. 4 residues coordinate isopentenyl diphosphate: S225, S226, N227, and S269.

Belongs to the IspH family. It depends on [4Fe-4S] cluster as a cofactor.

It carries out the reaction isopentenyl diphosphate + 2 oxidized [2Fe-2S]-[ferredoxin] + H2O = (2E)-4-hydroxy-3-methylbut-2-enyl diphosphate + 2 reduced [2Fe-2S]-[ferredoxin] + 2 H(+). The enzyme catalyses dimethylallyl diphosphate + 2 oxidized [2Fe-2S]-[ferredoxin] + H2O = (2E)-4-hydroxy-3-methylbut-2-enyl diphosphate + 2 reduced [2Fe-2S]-[ferredoxin] + 2 H(+). The protein operates within isoprenoid biosynthesis; dimethylallyl diphosphate biosynthesis; dimethylallyl diphosphate from (2E)-4-hydroxy-3-methylbutenyl diphosphate: step 1/1. Its pathway is isoprenoid biosynthesis; isopentenyl diphosphate biosynthesis via DXP pathway; isopentenyl diphosphate from 1-deoxy-D-xylulose 5-phosphate: step 6/6. Its function is as follows. Catalyzes the conversion of 1-hydroxy-2-methyl-2-(E)-butenyl 4-diphosphate (HMBPP) into a mixture of isopentenyl diphosphate (IPP) and dimethylallyl diphosphate (DMAPP). Acts in the terminal step of the DOXP/MEP pathway for isoprenoid precursor biosynthesis. The polypeptide is 4-hydroxy-3-methylbut-2-enyl diphosphate reductase (Rhodopirellula baltica (strain DSM 10527 / NCIMB 13988 / SH1)).